The primary structure comprises 538 residues: Diacylglycerol O-acyltransferase 1-1 (538 aa).

Disordered regions lie at residues 1–39 and 54–106; these read MVGSDGDGDGGGGEAHAPAAPAHHHRRPPRPRGGSGAIV and AAAA…GGGR. Positions 69–83 are enriched in low complexity; that stretch reads EAASGEPSSSSSSSP. The next 7 membrane-spanning stretches (helical) occupy residues 136–156, 186–206, 218–238, 245–265, 293–313, 326–346, and 382–402; these read AIFKQSHAGLFNLCIVVLVAV, WPLLMCCLSLPAFPLGAFAVE, VATCLHIFLSTTEIVYPVLVI, VLSGFLLIFIACIVWLKLVSF, NLQPPTLGNLIYFMMAPTLCY, GWLIRQIILYLIFTGLQGFII, and LWLCMFYAFFHLWLSILAEIL. The short motif at 409-415 is the FYXDWWN motif element; the sequence is FYKDWWN. 3 helical membrane passes run 451–471, 474–494, and 505–525; these read VAVLISFLVSAVLHEICVAVP, ILKFWAFLGIMLQIPLIVLTA, and VGNMIFWFFFCIYGQPMCLLL. His464 is a catalytic residue.

This sequence belongs to the membrane-bound acyltransferase family. Sterol o-acyltransferase subfamily.

It localises to the endoplasmic reticulum membrane. The catalysed reaction is an acyl-CoA + a 1,2-diacyl-sn-glycerol = a triacyl-sn-glycerol + CoA. Its pathway is glycerolipid metabolism; triacylglycerol biosynthesis. Its function is as follows. Involved in triacylglycerol (TAG) synthesis. Catalyzes the acylation of the sn-3 hydroxy group of sn-1,2-diacylglycerol using acyl-CoA. The sequence is that of Diacylglycerol O-acyltransferase 1-1 from Oryza sativa subsp. japonica (Rice).